Consider the following 67-residue polypeptide: MSHVSVIAARLLVWVGILLCLGVPQLWANPIYLYEPSANKSTRAPQVLGVPPEVYAFTVSCKACWLP.

The signal sequence occupies residues 1 to 28 (MSHVSVIAARLLVWVGILLCLGVPQLWA). Asn-39 carries N-linked (GlcNAc...) asparagine; by host glycosylation.

This is an uncharacterized protein from Invertebrate iridescent virus 3 (IIV-3).